The following is a 516-amino-acid chain: MFNDIESHRVPNVGQGRSFEVRTFGCQMNVHDSERLSGLLEEAGYHAVADGEEPDLVVFNTCAVRENADKRLYGTLGQLRSAKEKNPRMQIAVGGCLAQKDKDTVVAKAPWVDAVFGTHNMGALPSLLSRSEHNKRAEVEIVDSLEQFPSVLPAKRESAYAGWVSVSVGCNNTCTFCIVPSLRGKEVDRRPGDILAEVQALVDQGVSEVTLLGQNVNAYGVNFSDPDIQRDRFAFSKLLRACGKIEGLERLRFTSPHPAEFTHDVIDAMAETPNVCPQLHMPLQSGSDKVLKEMRRSYRSKKFLGILEEVRAKIPHASITTDIIVGFPGETEEDFQETLNVVEKARFTSAYTFQYSPRPGTPAADYADQVPKEVVQDRYERLLALQERISTEENAKLIGTEVELLVQASGGRKNDKTQRMTGRSRDGRLVHFDPQGHVDGDIRPGDVITTVVTEAKPFFLIADSGVLQHRRTKAGDMSAAGKVPTTAPVGVGLGLPSIGSPAQKRSETSKSSGCGC.

The MTTase N-terminal domain occupies 17–133 (RSFEVRTFGC…LPSLLSRSEH (117 aa)). [4Fe-4S] cluster contacts are provided by Cys-26, Cys-62, Cys-96, Cys-170, Cys-174, and Cys-177. The region spanning 156–392 (RESAYAGWVS…LALQERISTE (237 aa)) is the Radical SAM core domain. In terms of domain architecture, TRAM spans 395–466 (AKLIGTEVEL…PFFLIADSGV (72 aa)). Disordered stretches follow at residues 409–438 (SGGR…QGHV) and 492–516 (GLGL…GCGC). Positions 412 to 438 (RKNDKTQRMTGRSRDGRLVHFDPQGHV) are enriched in basic and acidic residues.

This sequence belongs to the methylthiotransferase family. MiaB subfamily. Monomer. [4Fe-4S] cluster is required as a cofactor.

Its subcellular location is the cytoplasm. The catalysed reaction is N(6)-dimethylallyladenosine(37) in tRNA + (sulfur carrier)-SH + AH2 + 2 S-adenosyl-L-methionine = 2-methylsulfanyl-N(6)-dimethylallyladenosine(37) in tRNA + (sulfur carrier)-H + 5'-deoxyadenosine + L-methionine + A + S-adenosyl-L-homocysteine + 2 H(+). Functionally, catalyzes the methylthiolation of N6-(dimethylallyl)adenosine (i(6)A), leading to the formation of 2-methylthio-N6-(dimethylallyl)adenosine (ms(2)i(6)A) at position 37 in tRNAs that read codons beginning with uridine. The chain is tRNA-2-methylthio-N(6)-dimethylallyladenosine synthase from Corynebacterium diphtheriae (strain ATCC 700971 / NCTC 13129 / Biotype gravis).